Consider the following 226-residue polypeptide: Deoxyribose-phosphate aldolase (226 aa).

The active-site Proton donor/acceptor is the aspartate 84. Lysine 146 acts as the Schiff-base intermediate with acetaldehyde in catalysis. Lysine 188 serves as the catalytic Proton donor/acceptor.

The protein belongs to the DeoC/FbaB aldolase family. DeoC type 1 subfamily. In terms of assembly, homodimer.

Its subcellular location is the cytoplasm. It catalyses the reaction 2-deoxy-D-ribose 5-phosphate = D-glyceraldehyde 3-phosphate + acetaldehyde. The protein operates within carbohydrate degradation; 2-deoxy-D-ribose 1-phosphate degradation; D-glyceraldehyde 3-phosphate and acetaldehyde from 2-deoxy-alpha-D-ribose 1-phosphate: step 2/2. Catalyzes a reversible aldol reaction between acetaldehyde and D-glyceraldehyde 3-phosphate to generate 2-deoxy-D-ribose 5-phosphate. The sequence is that of Deoxyribose-phosphate aldolase from Pyrobaculum aerophilum (strain ATCC 51768 / DSM 7523 / JCM 9630 / CIP 104966 / NBRC 100827 / IM2).